The following is a 599-amino-acid chain: Zinc metalloproteinase dpy-31 (599 aa).

A signal peptide spans 1 to 22 (MALLKPFLSRTFSSFFATITGG). A propeptide spanning residues 23–211 (RNLIDSIEEL…IQHGRRTKRK (189 aa)) is cleaved from the precursor. Residues 211–410 (KFIRSELRRW…IRLMNVIYCS (200 aa)) form the Peptidase M12A domain. N251 carries N-linked (GlcNAc...) asparagine glycosylation. Disulfide bonds link C254/C409, C277/C298, C413/C433, C435/C444, and C455/C483. Residue H306 coordinates Zn(2+). E307 is a catalytic residue. H310 and H316 together coordinate Zn(2+). The EGF-like domain occupies 405 to 445 (NVIYCSDSCAQKLPCQRGGYTDPRRCGRCRCPDGFTGKLCE). The region spanning 455-571 (CGGRIELTSS…KGFQAQVRAL (117 aa)) is the CUB domain. The N-linked (GlcNAc...) asparagine glycan is linked to N522.

The cofactor is Zn(2+).

The protein localises to the secreted. Inhibited by marimastat and tripeptide hydroxamic acids. Its function is as follows. Metalloprotease which cleaves the carboxyl terminus of procollagens to mature collagens. Probably involved in cuticular collagen maturation. The sequence is that of Zinc metalloproteinase dpy-31 from Brugia malayi (Filarial nematode worm).